A 277-amino-acid chain; its full sequence is 2-dehydro-3-deoxyphosphooctonate aldolase (277 aa).

The protein belongs to the KdsA family.

The protein resides in the cytoplasm. The catalysed reaction is D-arabinose 5-phosphate + phosphoenolpyruvate + H2O = 3-deoxy-alpha-D-manno-2-octulosonate-8-phosphate + phosphate. The protein operates within carbohydrate biosynthesis; 3-deoxy-D-manno-octulosonate biosynthesis; 3-deoxy-D-manno-octulosonate from D-ribulose 5-phosphate: step 2/3. It participates in bacterial outer membrane biogenesis; lipopolysaccharide biosynthesis. The polypeptide is 2-dehydro-3-deoxyphosphooctonate aldolase (Hydrogenovibrio crunogenus (strain DSM 25203 / XCL-2) (Thiomicrospira crunogena)).